Consider the following 163-residue polypeptide: Large ribosomal subunit protein uL10 (163 aa).

It belongs to the universal ribosomal protein uL10 family. Part of the ribosomal stalk of the 50S ribosomal subunit. The N-terminus interacts with L11 and the large rRNA to form the base of the stalk. The C-terminus forms an elongated spine to which L12 dimers bind in a sequential fashion forming a multimeric L10(L12)X complex.

Functionally, forms part of the ribosomal stalk, playing a central role in the interaction of the ribosome with GTP-bound translation factors. This chain is Large ribosomal subunit protein uL10, found in Glaesserella parasuis serovar 5 (strain SH0165) (Haemophilus parasuis).